The primary structure comprises 199 residues: N-(5'-phosphoribosyl)anthranilate isomerase (199 aa).

The protein belongs to the TrpF family.

It catalyses the reaction N-(5-phospho-beta-D-ribosyl)anthranilate = 1-(2-carboxyphenylamino)-1-deoxy-D-ribulose 5-phosphate. It participates in amino-acid biosynthesis; L-tryptophan biosynthesis; L-tryptophan from chorismate: step 3/5. The polypeptide is N-(5'-phosphoribosyl)anthranilate isomerase (Streptococcus pneumoniae (strain ATCC 700669 / Spain 23F-1)).